A 1885-amino-acid polypeptide reads, in one-letter code: Fatty acid synthase subunit alpha (1885 aa).

Residues Pro92–Glu107 are compositionally biased toward basic and acidic residues. A disordered region spans residues Pro92–Ser140. Over residues Ser108–Pro126 the composition is skewed to low complexity. The Carrier domain occupies Val146 to Gln221. The residue at position 181 (Ser181) is an O-(pantetheine 4'-phosphoryl)serine. Residues Ile1121 to His1661 enclose the Ketosynthase family 3 (KS3) domain. Residues Cys1304, His1546, and His1587 each act as for beta-ketoacyl synthase activity in the active site. Mg(2+)-binding residues include Asp1771, Val1772, and Glu1773. Acetyl-CoA contacts are provided by residues Asp1771 to Glu1773, Tyr1797, Ser1807, Glu1816 to Ser1826, Arg1840 to Asn1843, and Ile1870 to His1872. 2 residues coordinate Mg(2+): Ser1871 and His1872.

This sequence belongs to the thiolase-like superfamily. Fungal fatty acid synthetase subunit alpha family. [Alpha(6)beta(6)] hexamers of two multifunctional subunits (alpha and beta).

It carries out the reaction acetyl-CoA + n malonyl-CoA + 2n NADPH + 4n H(+) = a long-chain-acyl-CoA + n CoA + n CO2 + 2n NADP(+).. The catalysed reaction is a fatty acyl-[ACP] + malonyl-[ACP] + H(+) = a 3-oxoacyl-[ACP] + holo-[ACP] + CO2. The enzyme catalyses a (3R)-hydroxyacyl-[ACP] + NADP(+) = a 3-oxoacyl-[ACP] + NADPH + H(+). In terms of biological role, fatty acid synthetase catalyzes the formation of long-chain fatty acids from acetyl-CoA, malonyl-CoA and NADPH. The alpha subunit contains domains for: acyl carrier protein, 3-oxoacyl-[acyl-carrier-protein] reductase, and 3-oxoacyl-[acyl-carrier-protein] synthase. The polypeptide is Fatty acid synthase subunit alpha (FAS2) (Candida albicans (Yeast)).